We begin with the raw amino-acid sequence, 446 residues long: Aspartokinase (446 aa).

The region spanning 250–294 (IPLVKSTYMEESALNTKHSTKIDIPEDASGSTYKLPIELALQNRY) is the RPE1 insert domain.

This sequence belongs to the aspartokinase family.

It catalyses the reaction L-aspartate + ATP = 4-phospho-L-aspartate + ADP. The protein operates within amino-acid biosynthesis; L-lysine biosynthesis via DAP pathway; (S)-tetrahydrodipicolinate from L-aspartate: step 1/4. It participates in amino-acid biosynthesis; L-methionine biosynthesis via de novo pathway; L-homoserine from L-aspartate: step 1/3. It functions in the pathway amino-acid biosynthesis; L-threonine biosynthesis; L-threonine from L-aspartate: step 1/5. This Rickettsia prowazekii (strain Madrid E) protein is Aspartokinase (lysC).